The primary structure comprises 176 residues: Prion-like protein doppel (176 aa).

The N-terminal stretch at 1–25 (MRKHLSWWWLATVCMLLFSHLSAVQ) is a signal peptide. The tract at residues 27–50 (RGIKHRIKWNRKALPSTAQITEAQ) is flexible tail. Thr-43 carries O-linked (GalNAc...) threonine glycosylation. The interval 51–152 (VAENRPGAFI…KHCEFWLERG (102 aa)) is globular. 2 disulfide bridges follow: Cys-94/Cys-145 and Cys-108/Cys-140. Asn-98 and Asn-110 each carry an N-linked (GlcNAc...) asparagine glycan. The segment at 122 to 139 (KPDNKLHQQVLWRLVQEL) is cu(2+) binding. A lipid anchor (GPI-anchor amidated glycine) is attached at Gly-152. Positions 153–176 (AGLRVTMHQPVLLCLLALIWLTVK) are cleaved as a propeptide — removed in mature form.

It belongs to the prion family. Post-translationally, N-glycosylated. N-glycosylated at two distinct sites. In terms of processing, O-glycosylated. Expressed in testis, in Sertoli cells, ejaculated spermatozoa and in seminal fluid (at protein level).

The protein resides in the cell membrane. Functionally, required for normal acrosome reaction and for normal male fertility. Can bind Cu(2+). This chain is Prion-like protein doppel (PRND), found in Homo sapiens (Human).